A 130-amino-acid polypeptide reads, in one-letter code: Small ribosomal subunit protein uS9 (130 aa).

This sequence belongs to the universal ribosomal protein uS9 family.

This is Small ribosomal subunit protein uS9 from Xanthomonas axonopodis pv. citri (strain 306).